Here is a 173-residue protein sequence, read N- to C-terminus: Alpha-crystallin A chain (173 aa).

At M1 the chain carries N-acetylmethionine. Residues 1–63 (MDIAIQHPWF…RTVLDSGISE (63 aa)) are required for complex formation with BFSP1 and BFSP2. Q6 carries the deamidated glutamine; partial modification. Phosphoserine is present on S45. A Deamidated glutamine; partial modification is found at Q50. Positions 52-162 (LFRTVLDSGI…GHSERAIPVS (111 aa)) constitute a sHSP domain. K70 carries the post-translational modification N6-acetyllysine. A Deamidated glutamine; partial modification is found at Q90. K99 carries the N6-acetyllysine modification. A Zn(2+)-binding site is contributed by H100. N101 carries the deamidated asparagine; partial modification. Zn(2+)-binding residues include E102 and H107. S122 carries the phosphoserine modification. Deamidated asparagine; partial is present on N123. The tract at residues 144-173 (PKVPSGVDAGHSERAIPVSREEKPSSAPSS) is disordered. Basic and acidic residues predominate over residues 153–167 (GHSERAIPVSREEKP). H154 serves as a coordination point for Zn(2+). An O-linked (GlcNAc) serine glycan is attached at S162.

Belongs to the small heat shock protein (HSP20) family. In terms of assembly, heteromer composed of three CRYAA and one CRYAB subunits. Inter-subunit bridging via zinc ions enhances stability, which is crucial as there is no protein turn over in the lens. Can also form homodimers and homotetramers (dimers of dimers) which serve as the building blocks of homooligomers. Within homooligomers, the zinc-binding motif is created from residues of 3 different molecules. His-100 and Glu-102 from one molecule are ligands of the zinc ion, and His-107 and His-154 residues from additional molecules complete the site with tetrahedral coordination geometry. Part of a complex required for lens intermediate filament formation composed of BFSP1, BFSP2 and CRYAA. In terms of processing, acetylation at Lys-70 may increase chaperone activity. Undergoes age-dependent proteolytical cleavage at the C-terminus.

Its subcellular location is the cytoplasm. It localises to the nucleus. Functionally, contributes to the transparency and refractive index of the lens. Acts as a chaperone, preventing aggregation of various proteins under a wide range of stress conditions. Required for the correct formation of lens intermediate filaments as part of a complex composed of BFSP1, BFSP2 and CRYAA. In Ovis aries (Sheep), this protein is Alpha-crystallin A chain (CRYAA).